A 335-amino-acid polypeptide reads, in one-letter code: Biotin synthase (335 aa).

In terms of domain architecture, Radical SAM core spans 46–274 (YNIQLASLFS…KSKIRLSAGR (229 aa)). [4Fe-4S] cluster is bound by residues Cys61, Cys65, and Cys68. [2Fe-2S] cluster is bound by residues Cys105, Cys137, Cys197, and Arg269.

Belongs to the radical SAM superfamily. Biotin synthase family. Homodimer. Requires [4Fe-4S] cluster as cofactor. [2Fe-2S] cluster serves as cofactor.

The catalysed reaction is (4R,5S)-dethiobiotin + (sulfur carrier)-SH + 2 reduced [2Fe-2S]-[ferredoxin] + 2 S-adenosyl-L-methionine = (sulfur carrier)-H + biotin + 2 5'-deoxyadenosine + 2 L-methionine + 2 oxidized [2Fe-2S]-[ferredoxin]. Its pathway is cofactor biosynthesis; biotin biosynthesis; biotin from 7,8-diaminononanoate: step 2/2. Functionally, catalyzes the conversion of dethiobiotin (DTB) to biotin by the insertion of a sulfur atom into dethiobiotin via a radical-based mechanism. The chain is Biotin synthase from Prochlorococcus marinus (strain MIT 9312).